An 882-amino-acid chain; its full sequence is MDARYNPQAIESKWQAHWREIGLDRTPELKDGSRKFYALSMFPYPSGNLHMGHVRNYTITDVIARHKRMQGYAVLHPMGWDAFGLPAENAAIDRGIPPAKWTYQNIAQMREQLQRLGLSYDWEREITTCAPDYYKWTQWLFLQFFKAGLAYQKEAPVNWDPVDQTVLANEQVDAEGRSWRSGALVEKRMLKQWFFKITAYADQLLADLEKLSGWPERVRTMQENWIGQSVGAKVIFKTEAGDELAVFTTRPDTLWGATFMVMSPEHPLVDKLTTAEQLQAVRAYQAQAAARSEIERSAEDREKTGVWTGSYAINPVNQERIPIWIADYVLMGYGTGAIMAVPAHDQRDFEFARKFGLPIKRVVQPPEGSLSSTDRASGTESSELQAAWTGEGVMINSGPLDGIPVGKGPGQSVERAIAWLEAQGLGEKQINYRLRDWLISRQRYWGCPIPVIHCPHCGIVPVPEKDLPVLLPEDVELTGRGGSPLAQLEDWVKVKCPTCGAEARRETDTMDTFICSSWYFLRFSDARNDREIFRKDRVNAWLPVDQYVGGIEHAILHLLYSRFFTKVLRDRGLLDFDEPFLRLLTQGMVQGRTYYNPNKSGKDRWIPAALVKDPDNPTDPETGEPLEVIYATMSKSKGNGVDPEEVLAHYGADTARMFILFKAPPEKDLEWDDADVEGQFRFLNRVWRQVYEFVVRGGGTESWRGRVSELLPAKVEVGSLTKAEKDLRRAIHTAIKEVSEDLENDYQFNTAIAELMKLSNALGEAGIPDSPVYAEGIRTLVLLMAPFAPHIAEELWQALGGADSVHRQSWPSYDPAALVADTVTIVIQVNGKLRGSFEAPAEVTPEEQEQLALRSEAAQKYLEGATPKKVVVVPKKLVNFVL.

The 'HIGH' region signature appears at 43 to 53 (PYPSGNLHMGH). Residues 632-636 (TMSKS) carry the 'KMSKS' region motif. K635 provides a ligand contact to ATP.

It belongs to the class-I aminoacyl-tRNA synthetase family.

It localises to the cytoplasm. The enzyme catalyses tRNA(Leu) + L-leucine + ATP = L-leucyl-tRNA(Leu) + AMP + diphosphate. The sequence is that of Leucine--tRNA ligase from Synechococcus sp. (strain JA-2-3B'a(2-13)) (Cyanobacteria bacterium Yellowstone B-Prime).